A 102-amino-acid polypeptide reads, in one-letter code: MKSRQDIQKLFSTWCRRICSISSLLAPLDATMHKYDKKTLIRIYNPKKIGDTLQRCVKLLGHFKENPAYINTEQCWLCNFAARRHSRKNIRVSRMRAKRKYQ.

This is an uncharacterized protein from Saccharomyces cerevisiae (strain ATCC 204508 / S288c) (Baker's yeast).